The sequence spans 288 residues: Transmembrane and coiled-coil domain-containing protein 5A (288 aa).

A coiled-coil region spans residues 13–105; the sequence is IISLNMDLER…VHSISELQRK (93 aa). Residues 227-249 form a helical membrane-spanning segment; it reads SLLFSTLFFIRLLGYLIFHLSFI.

Testis-specific. Expressed in spermatogenic cells of testis but disappear by the time mature spermatozoa are formed (at protein level).

The protein localises to the endoplasmic reticulum membrane. Its subcellular location is the nucleus membrane. The protein is Transmembrane and coiled-coil domain-containing protein 5A (Tmco5a) of Rattus norvegicus (Rat).